The chain runs to 1652 residues: MSETYAKRLSAILLDAVTDKDPQMQEQVCGALCDFGESKPAEVLSACEEHLRLHEKLAHPYRTIILRAMEIVVSNHISELDKDTARAIILLASNEMTKVKELVSDWQQAASSVLVAVGRRFISSVMEELLSKFQPGLLPHPCTVHTLASLSVSNVFGVVPFLTSILSTMLPMLGAAKHDSMKVVFCCALQRFSESILEYLANLDQAPDPTVRKDAFASDIFGAYDILFHQWLQSGGAKLRLAVVEALGPMSHLLPSEKLEEQLPKLLPRVLAFYKKHTETVHVSKSLGQILEAAVSVGSRTLDIHLNSLLAALHAQICVPVESSSPLVMSNQKEVLRCFTVLACCSPDRLLAFLLPKLDTSNERTRVGTLQVLRHVINAAAAQMEVKKPVILSSMKLPLLDTNNKVKRAVVQVVSAMAHHGYLEQPGGKAMVEYIVQQCALPPEAEIQKLGADSEALAADSVRAISVSTLYLVSTTVDRMGEVLWPYLLEFLVPIRFTRALSPLCRSLVHLAQKRQEAGAHAPLIQYNGNVHLPSPYAITTRLLAVSSHPYVGDGRGAASLRLLNVLHQDIHPALGQRWVTAIPLLLEHLDEYSEETLSQKEWEEKLLVFLRDSLAVVSDNTWVCHLTLEMCKQLPNYNGTPLEKNFLYKCVGTTLGAASSKVVRKHLRELLETARYQEEREHEGLACCFGICAISHLDDTLAQLDDFVKSDVLRKSAGIFNLFKNRSESEANKVRSALILCYGHVAAGAPRELLLARVEADLFWNMSECFSTKVLGIKVETQDPALRLSLVQSVCMATQAICSSAHSSSFHLSRKAELVAQMVEFIRAEPPDSLKTPIWKKAMLACTYLVTLEPALEEQVQADLIHSCLHRVMAVLPEPEEGDSPQEVSAAPTVGGDPQESLYLDTVQVLKDLLTSLLLWNMTPLGLQVMLEHLSPWIKSPRGHERVRAVGLSACLLQFFLQHLQISALVPFHNLGLLIGLFSPRCADLWPATRREAVSCIHSLLYLQLTCVGFSRDYQDDVAEQLLSLKDGLVHPDPAILFHTCHSIAQLIAKRLPPDHLINLLLTLFESLGDPDKNCSRAASVMINCLLKERGNMLQEKVPEIVSVLRSKLQETQEEHILQAAQHSVFALATHHCASVVSNLLGSPLPFDSHTCTLWRALALEPGLAAQVLGLLLEKISKDVLFEESQAFLLSSTPDRVATLLPLAATCALHEVASAPASGPAVLELYPQLFVALLLRVSCTVGVQPPRQLQAKERRSASSGLASRSLEPCSSAVDALQAVLVRGGNEDVVQCMELDGGWQLLRTSAGHEEGVTRLASAMAKFAGPRLPLVMKLLFTTQSSMYEVQRVTSTAFLAELLSSNVVNDLMLLESLLYNLMARQKDTSARVRRLVLHGLANITLGSPDKVQTHSPQLLTAMIGGLDDGDDPHSLVALEAMVGLARLMDLVDAWDLHAVLLHIAVRIRPFFDSERMELRSVSIGLFGHLNKACRGDCKDVFLEQVVGGLVPLLLHLRDPHAPVVTACRFALRMCGPNLECEELAAVFQRHLQEGHDLHFGEFLNTTCKHLMRHFPDLLGRLLSTSLFYYKSSWEDVRAAAPMLTGFLVLHMEAEQRPQVDLEQLLTALQLLLKDPALKVRLKAVKTLGRLVKFA.

HEAT repeat units follow at residues 3–41, 260–300, 344–382, 385–423, 1369–1407, 1410–1448, and 1616–1652; these read ETYA…SKPA, EEQL…VGSR, CCSP…AAAA, EVKK…HGYL, LMLL…GSPD, QTHS…LMDL, and QVDL…VKFA.

It belongs to the MROH1 family. Homooligomer; homooligomerizes at lysosome scission sites.

It localises to the lysosome membrane. In terms of biological role, lysosome fission factor. Recruited to lysosomes by RAB7 (RAB7A or RAB7B) at scission sites and homooligomerizes to mediate the constriction and scission of lysosomal tubules. May sever membranes by inserting amphipathic helices into one bilayer leaflet. Lysosome fission is required to maintain their steady-state number, shape, size, composition and function, and to accomplish regeneration. In Bos taurus (Bovine), this protein is Maestro heat-like repeat-containing protein family member 1 (MROH1).